The following is a 235-amino-acid chain: Serine protease SplA (235 aa).

The signal sequence occupies residues 1–35 (MNKNVMVKGLTALTILTSLGFAENISNQPHSIAKA). Residues His-74, Asp-113, and Ser-189 each act as charge relay system in the active site.

The protein belongs to the peptidase S1B family.

The protein resides in the secreted. This Staphylococcus aureus (strain Mu3 / ATCC 700698) protein is Serine protease SplA (splA).